The chain runs to 658 residues: Trimethylamine N-oxide transport system permease protein TmoV (658 aa).

A run of 15 helical transmembrane segments spans residues 20–40, 103–123, 127–147, 153–173, 185–205, 212–232, 273–293, 300–320, 349–369, 420–440, 447–467, 469–489, 517–537, 585–605, and 627–647; these read LGLA…AGLL, IGPI…YYLG, MALL…WDIA, VLVV…ISAW, VLAV…VIFF, GAVA…TLGL, VIML…PGLG, MGSF…LLAV, FLLM…VVPI, FMLS…ALLV, VLAA…RSVI, LYSV…IGVV, IPAI…ILIF, AVGF…AAFI, and FVLG…IMKW. In terms of domain architecture, ABC transmembrane type-1 1 spans 147-326; it reads AMQTMSVLVV…LLAVTLDRMS (180 aa). The ABC transmembrane type-1 2 domain occupies 465 to 644; the sequence is SVITLYSVLA…LMALTFDMVI (180 aa).

Belongs to the binding-protein-dependent transport system permease family. As to quaternary structure, the complex is probably composed of two ATP-binding proteins (TmoW), two transmembrane proteins (TmoV) and a solute-binding protein (TmoX).

It localises to the cell inner membrane. Part of the ABC transporter complex TmoXWV involved in trimethylamine N-oxide (TMAO) import. Responsible for the translocation of the substrate across the membrane. Is specific for TMAO and essential for TMAO metabolism. The chain is Trimethylamine N-oxide transport system permease protein TmoV from Ruegeria pomeroyi (strain ATCC 700808 / DSM 15171 / DSS-3) (Silicibacter pomeroyi).